The sequence spans 573 residues: NEDD4-binding protein 3-B (573 aa).

3 disordered regions span residues 119–138 (EFSK…RFGP), 173–220 (CVGS…NSYS), and 384–405 (GENE…NLED). Positions 125–135 (LPERGHSDKSR) are enriched in basic and acidic residues. Low complexity predominate over residues 186–196 (SNSHSNNPSES). 2 stretches are compositionally biased toward polar residues: residues 207–220 (DSKQ…NSYS) and 392–401 (KQSQSDNSGP). Positions 287–474 (ESVEDVARQL…CLQALEDVKS (188 aa)) form a coiled coil.

The protein belongs to the N4BP3 family.

It is found in the cytoplasmic vesicle. Its subcellular location is the cell projection. The protein resides in the axon. The protein localises to the dendrite. Plays a role in axon and dendrite arborization during cranial nerve development. Also important for neural crest migration and early development of other anterior structures including eye, brain and cranial cartilage. The sequence is that of NEDD4-binding protein 3-B from Xenopus laevis (African clawed frog).